The sequence spans 328 residues: Malate dehydrogenase (328 aa).

Residue 11–17 participates in NAD(+) binding; it reads GAAGQIG. Residues Arg94 and Arg100 each contribute to the substrate site. NAD(+) contacts are provided by residues Asn107, Gln114, and 131-133; that span reads VGN. The substrate site is built by Asn133 and Arg164. The Proton acceptor role is filled by His189.

It belongs to the LDH/MDH superfamily. MDH type 2 family.

It carries out the reaction (S)-malate + NAD(+) = oxaloacetate + NADH + H(+). In terms of biological role, catalyzes the reversible oxidation of malate to oxaloacetate. The protein is Malate dehydrogenase of Acinetobacter baylyi (strain ATCC 33305 / BD413 / ADP1).